The following is a 190-amino-acid chain: Peptide deformylase (190 aa).

2 residues coordinate Fe cation: cysteine 94 and histidine 136. Glutamate 137 is an active-site residue. Histidine 140 contacts Fe cation.

It belongs to the polypeptide deformylase family. Fe(2+) serves as cofactor.

It catalyses the reaction N-terminal N-formyl-L-methionyl-[peptide] + H2O = N-terminal L-methionyl-[peptide] + formate. Removes the formyl group from the N-terminal Met of newly synthesized proteins. Requires at least a dipeptide for an efficient rate of reaction. N-terminal L-methionine is a prerequisite for activity but the enzyme has broad specificity at other positions. The polypeptide is Peptide deformylase (Chlorobium luteolum (strain DSM 273 / BCRC 81028 / 2530) (Pelodictyon luteolum)).